Here is a 635-residue protein sequence, read N- to C-terminus: Sodium- and chloride-dependent creatine transporter 1 (635 aa).

The interval 1 to 35 (MAKKSAENGIYSVSGDEKKGPLIAPGPDGAPAKGD) is disordered. Residues 1-60 (MAKKSAENGIYSVSGDEKKGPLIAPGPDGAPAKGDGPAGLGAPGGCLAVPPRETWTRQMD) are Cytoplasmic-facing. Positions 25–35 (PGPDGAPAKGD) are enriched in low complexity. The chain crosses the membrane as a helical span at residues 61–81 (FIMSCVGFAVGLGNVWRFPYL). Topologically, residues 82–87 (CYKNGG) are extracellular. Residues 88 to 108 (GVFLIPYVLIALVGGIPIFFL) traverse the membrane as a helical segment. Over 109-138 (EISLGQFMKAGSINVWNICPLFKGLGYASM) the chain is Cytoplasmic. Residues 139–159 (VIVFYCNTYYIMVLAWGFYYL) traverse the membrane as a helical segment. Residues 160-230 (VKSFTTTLPW…LSGGLEVPGA (71 aa)) are Extracellular-facing. N-linked (GlcNAc...) asparagine glycosylation is found at Asn192 and Asn197. A helical membrane pass occupies residues 231–251 (LNSEVTLCLLACWVLVYFCVW). The Cytoplasmic portion of the chain corresponds to 252-269 (KGVKSTGKIVYFTATFPY). A helical transmembrane segment spans residues 270–290 (VVLVVLLVRGVLLPGALDGII). Residues 291 to 304 (YYLKPDWSKLRSPQ) lie on the Extracellular side of the membrane. A helical transmembrane segment spans residues 305-325 (VWIDAGTQIFFSYAIGLGALT). The Cytoplasmic portion of the chain corresponds to 326-341 (ALGSYNRFNNNCYKDA). The helical transmembrane segment at 342 to 362 (IILALINSGTSFFAGFVVFSI) threads the bilayer. Residues 363–394 (LGFMATEQGVHISKVAESGPGLAFIAYPRAVT) lie on the Extracellular side of the membrane. Residues 395-415 (LMPVAPLWAALFFFMLLLLGL) traverse the membrane as a helical segment. Topologically, residues 416-444 (DSQFVGVEGFITGLLDLLPASYYFRFQRE) are cytoplasmic. Residues 445-465 (ISVALCCALCFVIDLSMVQMA) traverse the membrane as a helical segment. Residues 466 to 479 (GMYVFQLFDYYSAS) are Extracellular-facing. A helical transmembrane segment spans residues 480-500 (GTTLLWQAFWECVAVAWVYGA). Topologically, residues 501-520 (DRFMDDIACMIGYRPCPWMK) are cytoplasmic. The chain crosses the membrane as a helical span at residues 521 to 541 (WCWSFFTPLVCMGIFIFNIVY). The Extracellular portion of the chain corresponds to 542 to 560 (YKPLVYNKTYVYPWWGEAM). Asn548 is a glycosylation site (N-linked (GlcNAc...) asparagine). The helical transmembrane segment at 561 to 581 (GWAFALSSMLCVPLHLLGCLL) threads the bilayer. Topologically, residues 582-635 (RAKGTMAERWQHLTQPVWGLHHLEYRAQDADVRGLTTLTPVSESSKVVVVESVM) are cytoplasmic. 2 positions are modified to phosphothreonine: Thr617 and Thr620. At Ser623 the chain carries Phosphoserine.

Belongs to the sodium:neurotransmitter symporter (SNF) (TC 2.A.22) family. SLC6A8 subfamily. In terms of processing, glycosylated. As to expression, prominent in kidney, heart, and muscle, also present in brain, but not in liver and intestine.

Its subcellular location is the cell membrane. It is found in the apical cell membrane. The enzyme catalyses creatine(out) + chloride(out) + 2 Na(+)(out) = creatine(in) + chloride(in) + 2 Na(+)(in). In terms of biological role, creatine:sodium symporter which mediates the uptake of creatine. Plays an important role in supplying creatine to the brain via the blood-brain barrier. This is Sodium- and chloride-dependent creatine transporter 1 (SLC6A8) from Oryctolagus cuniculus (Rabbit).